A 132-amino-acid chain; its full sequence is Translation initiation factor 2 subunit beta (132 aa).

The tract at residues 1-30 is disordered; sequence MDYEEQLDRAMDEKPDVTGSETRFEVPDPN.

It belongs to the eIF-2-beta/eIF-5 family. As to quaternary structure, heterotrimer composed of an alpha, a beta and a gamma chain.

EIF-2 functions in the early steps of protein synthesis by forming a ternary complex with GTP and initiator tRNA. In Halobacterium salinarum (strain ATCC 29341 / DSM 671 / R1), this protein is Translation initiation factor 2 subunit beta.